Here is a 784-residue protein sequence, read N- to C-terminus: Protein Skeletor, isoforms B/C (784 aa).

An N-terminal signal peptide occupies residues Met-1 to Ala-28. DM13 domains lie at Gly-34 to Pro-143 and Pro-151 to Pro-258. The region spanning Leu-287 to Gly-419 is the DOMON domain. The disordered stretch occupies residues Pro-451–Pro-491.

As to quaternary structure, interacts with Chro and Mgtor as part of a macromolecular complex forming the spindle matrix. Chro colocalizes with Skeletor (Skel) on the chromosomes at interphase and on spindle during metaphase.

The protein localises to the cytoplasm. The protein resides in the cytoskeleton. Its subcellular location is the spindle. It localises to the nucleus. It is found in the nucleolus. The protein localises to the chromosome. Functionally, provides structural support to stabilize and organize the microtubule spindle during mitosis (within embryonic somatic cells) and meiosis (within spermatocytes). The role in mitosis regulation depends on the Ran pathway. This Drosophila melanogaster (Fruit fly) protein is Protein Skeletor, isoforms B/C.